Reading from the N-terminus, the 421-residue chain is MVDLKRLRQEPEVFHRAIREKGVALDLEALLALDQEVQELKKRLQEVQTERNQVAKRVPKAPPEEKEALIARGRALGEEAKRLEEALREKEAQLEALLLQVPLPPWPGAPVGGEEANREIKRVGSPPEFSFPPLDHVALMEKNGWWEPRISQVSGSRSYALKGDLALYELALLRFAMDFMARRGFLPMTLPSYAREKAFLGTGHFPAYRDQVWAIAETDLYLTGTAEVVLNALHSGEILPYEALPLRYAGYAPAFRSEAGSFGKDVRGLMRVHQFHKVEQYVLTEASLEASDRAFQELLENAEEILRLLELPYRLVEVATGDMGPGKWRQVDVEVYLPSEGRYRETHSCSALLDWQARRANLRYRDPEGRVRYAYTLNNTALATPRILAMLLENHQLQDGRVRVPKALVPYMGKEVLEPCG.

L-serine is bound at residue 225–227 (TAE). ATP contacts are provided by residues 256 to 258 (RSE) and Val272. Residue Glu279 participates in L-serine binding. 345–348 (ETHS) is an ATP binding site. L-serine is bound at residue Thr380.

This sequence belongs to the class-II aminoacyl-tRNA synthetase family. Type-1 seryl-tRNA synthetase subfamily. As to quaternary structure, homodimer. The tRNA molecule binds across the dimer.

The protein localises to the cytoplasm. The enzyme catalyses tRNA(Ser) + L-serine + ATP = L-seryl-tRNA(Ser) + AMP + diphosphate + H(+). It catalyses the reaction tRNA(Sec) + L-serine + ATP = L-seryl-tRNA(Sec) + AMP + diphosphate + H(+). It participates in aminoacyl-tRNA biosynthesis; selenocysteinyl-tRNA(Sec) biosynthesis; L-seryl-tRNA(Sec) from L-serine and tRNA(Sec): step 1/1. Its function is as follows. Catalyzes the attachment of serine to tRNA(Ser). Is also able to aminoacylate tRNA(Sec) with serine, to form the misacylated tRNA L-seryl-tRNA(Sec), which will be further converted into selenocysteinyl-tRNA(Sec). This Thermus thermophilus (strain ATCC 27634 / DSM 579 / HB8) protein is Serine--tRNA ligase.